The following is a 942-amino-acid chain: Isoleucine--tRNA ligase (942 aa).

Positions 58 to 68 (PYANGDIHLGH) match the 'HIGH' region motif. Glu-567 contributes to the L-isoleucyl-5'-AMP binding site. The 'KMSKS' region motif lies at 608-612 (KMSKS). Residue Lys-611 coordinates ATP. Residues Cys-905, Cys-908, Cys-925, and Cys-928 each coordinate Zn(2+).

This sequence belongs to the class-I aminoacyl-tRNA synthetase family. IleS type 1 subfamily. Monomer. Requires Zn(2+) as cofactor.

Its subcellular location is the cytoplasm. The enzyme catalyses tRNA(Ile) + L-isoleucine + ATP = L-isoleucyl-tRNA(Ile) + AMP + diphosphate. Functionally, catalyzes the attachment of isoleucine to tRNA(Ile). As IleRS can inadvertently accommodate and process structurally similar amino acids such as valine, to avoid such errors it has two additional distinct tRNA(Ile)-dependent editing activities. One activity is designated as 'pretransfer' editing and involves the hydrolysis of activated Val-AMP. The other activity is designated 'posttransfer' editing and involves deacylation of mischarged Val-tRNA(Ile). The protein is Isoleucine--tRNA ligase of Pseudoalteromonas translucida (strain TAC 125).